The following is a 1115-amino-acid chain: Ubiquitin C-terminal hydrolase 13 (1115 aa).

Residues 1 to 51 (MTMMTPPPLDQQEDEEMLVPNPDLVEGPQPMEVAQTDPAATAVENPPPEDP) are disordered. An MATH domain is found at 53-178 (SLKFTWTIPM…NDTVLIEAEV (126 aa)). Positions 198–522 (VGLKNQGATC…NAYMLVYIRE (325 aa)) constitute a USP domain. Cys-207 functions as the Nucleophile in the catalytic mechanism. The active-site Proton acceptor is His-454.

Belongs to the peptidase C19 family. Interacts with SIC/RON3. Interacts with RGI1 and RGI2.

The catalysed reaction is Thiol-dependent hydrolysis of ester, thioester, amide, peptide and isopeptide bonds formed by the C-terminal Gly of ubiquitin (a 76-residue protein attached to proteins as an intracellular targeting signal).. Its function is as follows. Recognizes and hydrolyzes the peptide bond at the C-terminal Gly of ubiquitin. Involved in the processing of poly-ubiquitin precursors as well as that of ubiquitinated proteins. Positive regulator of root meristem development that, together with UBP12, prevents the ubiquitination and turnover of RGFR1 induced by the RGF1 hormone peptide, thus influencing PLT1 and PLT2 expression. The protein is Ubiquitin C-terminal hydrolase 13 of Arabidopsis thaliana (Mouse-ear cress).